Consider the following 374-residue polypeptide: Trehalose-phosphate phosphatase B (374 aa).

The protein belongs to the trehalose phosphatase family. Requires a divalent metal cation as cofactor. As to expression, expressed in flowers.

The catalysed reaction is alpha,alpha-trehalose 6-phosphate + H2O = alpha,alpha-trehalose + phosphate. Its pathway is glycan biosynthesis; trehalose biosynthesis. In terms of biological role, removes the phosphate from trehalose 6-phosphate to produce free trehalose. Trehalose accumulation in plant may improve abiotic stress tolerance. The sequence is that of Trehalose-phosphate phosphatase B (TPPB) from Arabidopsis thaliana (Mouse-ear cress).